Here is a 381-residue protein sequence, read N- to C-terminus: Opsin Rh2 (381 aa).

The Extracellular segment spans residues 1-56 (MERSHLPETPFDLAHSGPRFQAQSSGNGSVLDNVLPDMAHLVNPYWSRFAPMDPMM). The N-linked (GlcNAc...) asparagine glycan is linked to Asn-27. Residues 57–81 (SKILGLFTLAIMIISCCGNGVVVYI) form a helical membrane-spanning segment. The Cytoplasmic portion of the chain corresponds to 82–93 (FGGTKSLRTPAN). The helical transmembrane segment at 94 to 119 (LLVLNLAFSDFCMMASQSPVMIINFY) threads the bilayer. Topologically, residues 120 to 133 (YETWVLGPLWCDIY) are extracellular. Cys-130 and Cys-207 are joined by a disulfide. A helical transmembrane segment spans residues 134–153 (AGCGSLFGCVSIWSMCMIAF). The Cytoplasmic portion of the chain corresponds to 154-172 (DRYNVIVKGINGTPMTIKT). Residues 173–196 (SIMKILFIWMMAVFWTVMPLIGWS) form a helical membrane-spanning segment. Residues 197-220 (AYVPEGNLTACSIDYMTRMWNPRS) lie on the Extracellular side of the membrane. The chain crosses the membrane as a helical span at residues 221 to 248 (YLITYSLFVYYTPLFLICYSYWFIIAAV). Topologically, residues 249 to 283 (AAHEKAMREQAKKMNVKSLRSSEDCDKSAEGKLAK) are cytoplasmic. A helical membrane pass occupies residues 284–307 (VALTTISLWFMAWTPYLVICYFGL). Residues 308–314 (FKIDGLT) lie on the Extracellular side of the membrane. The helical transmembrane segment at 315-339 (PLTTIWGATFAKTSAVYNPIVYGIS) threads the bilayer. N6-(retinylidene)lysine is present on Lys-326. Residues 340–381 (HPKYRIVLKEKCPMCVFGNTDEPKPDAPASDTETTSEADSKA) are Cytoplasmic-facing. A disordered region spans residues 359 to 381 (TDEPKPDAPASDTETTSEADSKA). The span at 370–381 (DTETTSEADSKA) shows a compositional bias: polar residues.

This sequence belongs to the G-protein coupled receptor 1 family. Opsin subfamily. Post-translationally, phosphorylated on some or all of the serine and threonine residues present in the C-terminal region. In terms of tissue distribution, predominant opsin expressed in the dorsal ocelli.

It is found in the membrane. In terms of biological role, visual pigments are the light-absorbing molecules that mediate vision. They consist of an apoprotein, opsin, covalently linked to cis-retinal. This chain is Opsin Rh2 (Rh2), found in Drosophila melanogaster (Fruit fly).